The primary structure comprises 389 residues: Growth/differentiation factor 2 (389 aa).

The N-terminal stretch at 1 to 20 (MWRVGHLLLLMSIVFRITEE) is a signal peptide. The propeptide occupies 21–280 (KSLGDAGSLE…PVSNRHRRRK (260 aa)). N-linked (GlcNAc...) asparagine glycans are attached at residues Asn65, Asn118, Asn127, and Asn232. Residues 263–272 (QQQVGNQAPV) are compositionally biased toward polar residues. Residues 263–284 (QQQVGNQAPVSNRHRRRKRKAK) are disordered. The span at 274–284 (NRHRRRKRKAK) shows a compositional bias: basic residues. Cystine bridges form between Cys288-Cys354, Cys317-Cys386, and Cys321-Cys388. N-linked (GlcNAc...) asparagine glycosylation occurs at Asn342.

The protein belongs to the TGF-beta family. As to quaternary structure, homodimer; disulfide-linked. A reversible disulfide bond can be formed between the two subunits in the homodimer; this has no effect on gdf2 activity.

The protein localises to the secreted. Functionally, potent circulating inhibitor of angiogenesis. Signals through the type I activin receptor ACVRL1 but not other Alks. Signaling through SMAD1 in endothelial cells requires TGF-beta coreceptor endoglin/eng. In Danio rerio (Zebrafish), this protein is Growth/differentiation factor 2 (gdf2).